The chain runs to 376 residues: MFTFIRSNLNNLKAYTPHSAGSSEILLDRLDTNECPYDLPDNLKQKLAENYQQLIETNRYPDGSHLKLKEAIAKYVNEVTPSANISANNISVGNGSDELIRSLLIVTCVGGEGSILTATPTFSMYSILAQTLGIPVVNVGRKESNFEIDITAAEDAINHTKNPSIKAIFVVHPNSPTANALNSQELVWLRSLPDDILVVIDEAYFEFSQTSLAEELNQHPNWVILRTFSKAFRLASLRVGYAIAHPEIIINLEKVRLPYNLPSFSQAAAQLVLNHSQHLLSFIPEILRERSKLFATFGEIPALKVWKSAANFLYMRLTDEGLKLMGKSSQDQSLSSLMQRLKTQGTLIRHTGGGLRITIGTSEENQRTVERIKGIF.

Position 230 is an N6-(pyridoxal phosphate)lysine (Lys230).

The protein belongs to the class-II pyridoxal-phosphate-dependent aminotransferase family. Histidinol-phosphate aminotransferase subfamily. Homodimer. The cofactor is pyridoxal 5'-phosphate.

The enzyme catalyses L-histidinol phosphate + 2-oxoglutarate = 3-(imidazol-4-yl)-2-oxopropyl phosphate + L-glutamate. It functions in the pathway amino-acid biosynthesis; L-histidine biosynthesis; L-histidine from 5-phospho-alpha-D-ribose 1-diphosphate: step 7/9. This chain is Histidinol-phosphate aminotransferase, found in Trichodesmium erythraeum (strain IMS101).